The following is a 266-amino-acid chain: Dioicin-2 (266 aa).

2 disulfide bridges follow: Cys-32–Cys-263 and Cys-85–Cys-102. Residue Glu-176 is part of the active site.

The protein localises to the secreted. The protein resides in the extracellular space. Its subcellular location is the golgi apparatus. It localises to the vacuole. The catalysed reaction is Endohydrolysis of the N-glycosidic bond at one specific adenosine on the 28S rRNA.. Functionally, nicks pBR322 dsDNA. Has adenine polynucleotide glycosidase activity on herring sperm ssDNA. The chain is Dioicin-2 from Phytolacca dioica (Bella sombra tree).